The following is an 851-amino-acid chain: Alanine--tRNA ligase (851 aa).

Zn(2+) is bound by residues His535, His539, Cys637, and His641.

Belongs to the class-II aminoacyl-tRNA synthetase family. Requires Zn(2+) as cofactor.

Its subcellular location is the cytoplasm. The catalysed reaction is tRNA(Ala) + L-alanine + ATP = L-alanyl-tRNA(Ala) + AMP + diphosphate. Catalyzes the attachment of alanine to tRNA(Ala) in a two-step reaction: alanine is first activated by ATP to form Ala-AMP and then transferred to the acceptor end of tRNA(Ala). Also edits incorrectly charged Ser-tRNA(Ala) and Gly-tRNA(Ala) via its editing domain. This is Alanine--tRNA ligase from Acholeplasma laidlawii (strain PG-8A).